Reading from the N-terminus, the 263-residue chain is Interleukin-22 receptor subunit alpha-2 (263 aa).

Residues 1 to 21 (MMPKHCFLGFLISFFLTGVAG) form the signal peptide. Fibronectin type-III domains follow at residues 26 to 68 (HESL…KIMF), 100 to 161 (GQRQ…TKID), and 162 to 263 (PPVM…VEIP). Residue N56 is glycosylated (N-linked (GlcNAc...) asparagine). Cysteines 110 and 118 form a disulfide. N166, N171, N192, and N209 each carry an N-linked (GlcNAc...) asparagine glycan. A disulfide bridge connects residues C238 and C259.

It belongs to the type II cytokine receptor family. Expressed in placenta, spleen, breast, skin and lung. Also detected in intestinal tract, testis, brain, heart and thymus. No expression found in prostate, bladder, kidney, ovary, muscle, bone marrow, liver and uterus. Isoform 1 is expressed only in placenta. Isoform 2 is expressed in placenta and breast and at lower level in spleen, skin, thymus and stomach.

The protein localises to the secreted. In terms of biological role, isoform 2 is a receptor for IL22. Binds to IL22, prevents interaction with the functional IL-22R complex and blocks the activity of IL22 (in vitro). May play an important role as an IL22 antagonist in the regulation of inflammatory responses. Isoform 1 may play a role in establishing and maintaining successful pregnancy. The polypeptide is Interleukin-22 receptor subunit alpha-2 (IL22RA2) (Homo sapiens (Human)).